The sequence spans 496 residues: Probable cytosol aminopeptidase (496 aa).

Residues lysine 258 and aspartate 263 each coordinate Mn(2+). Lysine 270 is a catalytic residue. Positions 281, 340, and 342 each coordinate Mn(2+). Residue arginine 344 is part of the active site.

It belongs to the peptidase M17 family. Requires Mn(2+) as cofactor.

It localises to the cytoplasm. It carries out the reaction Release of an N-terminal amino acid, Xaa-|-Yaa-, in which Xaa is preferably Leu, but may be other amino acids including Pro although not Arg or Lys, and Yaa may be Pro. Amino acid amides and methyl esters are also readily hydrolyzed, but rates on arylamides are exceedingly low.. The catalysed reaction is Release of an N-terminal amino acid, preferentially leucine, but not glutamic or aspartic acids.. Its function is as follows. Presumably involved in the processing and regular turnover of intracellular proteins. Catalyzes the removal of unsubstituted N-terminal amino acids from various peptides. This Helicobacter pylori (strain G27) protein is Probable cytosol aminopeptidase.